The primary structure comprises 368 residues: Phospho-N-acetylmuramoyl-pentapeptide-transferase (368 aa).

A run of 10 helical transmembrane segments spans residues 32 to 52 (TGGA…WIID), 79 to 99 (TPTM…VLWA), 102 to 122 (LNPY…IGFY), 140 to 160 (TRLL…IRLG), 176 to 196 (VVVD…VGAG), 207 to 227 (GLAI…AYLA), 247 to 267 (LAVL…FNAP), 271 to 291 (IFMG…IAVA), 296 to 316 (IVLA…IVQV), and 345 to 365 (QIVI…LSTL).

The protein belongs to the glycosyltransferase 4 family. MraY subfamily. Mg(2+) serves as cofactor.

The protein resides in the cell inner membrane. It carries out the reaction UDP-N-acetyl-alpha-D-muramoyl-L-alanyl-gamma-D-glutamyl-meso-2,6-diaminopimeloyl-D-alanyl-D-alanine + di-trans,octa-cis-undecaprenyl phosphate = di-trans,octa-cis-undecaprenyl diphospho-N-acetyl-alpha-D-muramoyl-L-alanyl-D-glutamyl-meso-2,6-diaminopimeloyl-D-alanyl-D-alanine + UMP. Its pathway is cell wall biogenesis; peptidoglycan biosynthesis. In terms of biological role, catalyzes the initial step of the lipid cycle reactions in the biosynthesis of the cell wall peptidoglycan: transfers peptidoglycan precursor phospho-MurNAc-pentapeptide from UDP-MurNAc-pentapeptide onto the lipid carrier undecaprenyl phosphate, yielding undecaprenyl-pyrophosphoryl-MurNAc-pentapeptide, known as lipid I. The polypeptide is Phospho-N-acetylmuramoyl-pentapeptide-transferase (Nitrobacter hamburgensis (strain DSM 10229 / NCIMB 13809 / X14)).